The following is a 462-amino-acid chain: UDP-N-acetylmuramoylalanine--D-glutamate ligase (462 aa).

Position 120–126 (120–126 (GTNGKTT)) interacts with ATP.

The protein belongs to the MurCDEF family.

The protein resides in the cytoplasm. It carries out the reaction UDP-N-acetyl-alpha-D-muramoyl-L-alanine + D-glutamate + ATP = UDP-N-acetyl-alpha-D-muramoyl-L-alanyl-D-glutamate + ADP + phosphate + H(+). Its pathway is cell wall biogenesis; peptidoglycan biosynthesis. In terms of biological role, cell wall formation. Catalyzes the addition of glutamate to the nucleotide precursor UDP-N-acetylmuramoyl-L-alanine (UMA). The polypeptide is UDP-N-acetylmuramoylalanine--D-glutamate ligase (Bdellovibrio bacteriovorus (strain ATCC 15356 / DSM 50701 / NCIMB 9529 / HD100)).